Consider the following 290-residue polypeptide: ATP synthase gamma chain (290 aa).

It belongs to the ATPase gamma chain family. F-type ATPases have 2 components, CF(1) - the catalytic core - and CF(0) - the membrane proton channel. CF(1) has five subunits: alpha(3), beta(3), gamma(1), delta(1), epsilon(1). CF(0) has three main subunits: a, b and c.

Its subcellular location is the cell inner membrane. In terms of biological role, produces ATP from ADP in the presence of a proton gradient across the membrane. The gamma chain is believed to be important in regulating ATPase activity and the flow of protons through the CF(0) complex. This Buchnera aphidicola subsp. Acyrthosiphon pisum (strain APS) (Acyrthosiphon pisum symbiotic bacterium) protein is ATP synthase gamma chain.